The sequence spans 310 residues: Olfactory receptor 2A7 (310 aa).

Over 1 to 24 the chain is Extracellular; that stretch reads MGNNMTLITEFILLGFPLSPRMQM. N4 is a glycosylation site (N-linked (GlcNAc...) asparagine). The helical transmembrane segment at 25 to 45 threads the bilayer; that stretch reads LLFALFSLFYAFTLLGNGTIV. Residues 46–53 are Cytoplasmic-facing; it reads GLICLDSR. A helical membrane pass occupies residues 54-74; it reads LHTPMYFFLSHLAIVDIAYAC. Residues 75–96 lie on the Extracellular side of the membrane; that stretch reads NTVPQMLVNLLDPVKPISYAGC. A disulfide bridge connects residues C96 and C178. Residues 97-117 traverse the membrane as a helical segment; it reads MTQTFLFLTFAITECLLLVVM. Residues 118–148 lie on the Cytoplasmic side of the membrane; the sequence is SYDRYVAICHPLRYSAIMSWRVCSTMAVTSW. The helical transmembrane segment at 149–169 threads the bilayer; the sequence is IIGVLLSLIHLVLLLPLPFCV. Residues 170 to 204 are Extracellular-facing; the sequence is SQKVNHFFCEITAILKLACADTHLNETMVLAGAVS. An N-linked (GlcNAc...) asparagine glycan is attached at N194. Residues 205 to 225 traverse the membrane as a helical segment; that stretch reads VLVGPFSSIVVSYACILGAIL. Residues 226 to 239 are Cytoplasmic-facing; sequence KIQSEEGQRKAFST. Residues 240–260 form a helical membrane-spanning segment; that stretch reads CSSHLCVVGLFYGTAIVMYVG. At 261 to 273 the chain is on the extracellular side; that stretch reads PRHGSPKEQKKYL. A helical transmembrane segment spans residues 274–291; the sequence is LLFHSLFNPMLNPLIYSL. Topologically, residues 292-310 are cytoplasmic; sequence RNSDVKNTLKRVLRTQRAL.

The protein belongs to the G-protein coupled receptor 1 family. As to expression, olfactory epithelium.

Its subcellular location is the cell membrane. Functionally, odorant receptor. The chain is Olfactory receptor 2A7 from Mus musculus (Mouse).